Here is a 118-residue protein sequence, read N- to C-terminus: Large ribosomal subunit protein bL19 (118 aa).

It belongs to the bacterial ribosomal protein bL19 family.

Functionally, this protein is located at the 30S-50S ribosomal subunit interface and may play a role in the structure and function of the aminoacyl-tRNA binding site. The sequence is that of Large ribosomal subunit protein bL19 from Helicobacter hepaticus (strain ATCC 51449 / 3B1).